The sequence spans 293 residues: AA9 family lytic polysaccharide monooxygenase E (293 aa).

A signal peptide spans 1–19 (MKGLLSVAALSLAVSEVSA). 2 residues coordinate Cu(2+): histidine 20 and histidine 90. A disulfide bond links cysteine 59 and cysteine 172. The O2 site is built by histidine 158 and glutamine 167. Tyrosine 169 is a binding site for Cu(2+). Residues 257-293 (CAVAKWGQCGGNGWTGCTTCAAGSTCNTQNAYYHQCV) form the CBM1 domain.

The protein belongs to the polysaccharide monooxygenase AA9 family. Cu(2+) is required as a cofactor.

It localises to the secreted. It carries out the reaction [(1-&gt;4)-beta-D-glucosyl]n+m + reduced acceptor + O2 = 4-dehydro-beta-D-glucosyl-[(1-&gt;4)-beta-D-glucosyl]n-1 + [(1-&gt;4)-beta-D-glucosyl]m + acceptor + H2O.. Glucose dehydrogenase and aryl-alcohol quinone oxidoreductases regulate the oxidative degradation of cellulose since they can act as catalytically efficient electron donors for LPMO9E. Functionally, lytic polysaccharide monooxygenase (LPMO) that depolymerizes crystalline and amorphous polysaccharides via the oxidation of scissile alpha- or beta-(1-4)-glycosidic bonds, yielding only C1 oxidation products. Catalysis by LPMOs requires the reduction of the active-site copper from Cu(II) to Cu(I) by a reducing agent and H(2)O(2) or O(2) as a cosubstrate. Improves the progression of lytic enzymes in delignified miscanthus cell walls. This boosting effect dependents on the cellular type which indicates contrasted recalcitrance levels in plant tissues. The chain is AA9 family lytic polysaccharide monooxygenase E from Podospora anserina (strain S / ATCC MYA-4624 / DSM 980 / FGSC 10383) (Pleurage anserina).